A 329-amino-acid polypeptide reads, in one-letter code: Phytochromobilin:ferredoxin oxidoreductase, chloroplastic (329 aa).

Residues 1–45 constitute a chloroplast transit peptide; it reads MALSMEFGFSIGSCFKAPNPPVLISASPNKINFTLRRRKKRFLLR.

Belongs to the HY2 family.

The protein localises to the plastid. The protein resides in the chloroplast. It carries out the reaction (3Z)-phytochromobilin + 2 oxidized [2Fe-2S]-[ferredoxin] = biliverdin IXalpha + 2 reduced [2Fe-2S]-[ferredoxin] + 2 H(+). Functionally, catalyzes the two-electron reduction of biliverdin IX-alpha to the tetrapyrrole chromophore phytochromobilin (PPhiB). In Arabidopsis thaliana (Mouse-ear cress), this protein is Phytochromobilin:ferredoxin oxidoreductase, chloroplastic.